A 493-amino-acid polypeptide reads, in one-letter code: Betaine aldehyde dehydrogenase (493 aa).

K(+)-binding residues include Ser-32, Ile-33, and Asp-99. 156–158 lines the NAD(+) pocket; the sequence is GAW. The Charge relay system role is filled by Lys-168. Residues 182-185 and 235-238 contribute to the NAD(+) site; these read KPSE and SVPT. Leu-250 serves as a coordination point for K(+). Glu-256 (proton acceptor) is an active-site residue. Residues Gly-258, Cys-290, and Glu-390 each contribute to the NAD(+) site. Cys-290 acts as the Nucleophile in catalysis. The residue at position 290 (Cys-290) is a Cysteine sulfenic acid (-SOH). K(+) contacts are provided by Lys-460 and Gly-463. Catalysis depends on Glu-467, which acts as the Charge relay system.

This sequence belongs to the aldehyde dehydrogenase family. Dimer of dimers. The cofactor is K(+).

It carries out the reaction betaine aldehyde + NAD(+) + H2O = glycine betaine + NADH + 2 H(+). It participates in amine and polyamine biosynthesis; betaine biosynthesis via choline pathway; betaine from betaine aldehyde: step 1/1. In terms of biological role, involved in the biosynthesis of the osmoprotectant glycine betaine. Catalyzes the irreversible oxidation of betaine aldehyde to the corresponding acid. In Agrobacterium fabrum (strain C58 / ATCC 33970) (Agrobacterium tumefaciens (strain C58)), this protein is Betaine aldehyde dehydrogenase.